Reading from the N-terminus, the 463-residue chain is Siroheme synthase 1 (463 aa).

Residues Met-1–Val-203 form a precorrin-2 dehydrogenase /sirohydrochlorin ferrochelatase region. NAD(+) contacts are provided by residues Glu-22 to Val-23 and Pro-43 to His-44. Ser-128 is subject to Phosphoserine. Residues Gly-215 to Val-463 are uroporphyrinogen-III C-methyltransferase. S-adenosyl-L-methionine is bound at residue Pro-224. Asp-247 functions as the Proton acceptor in the catalytic mechanism. Lys-269 acts as the Proton donor in catalysis. Residues Gly-300 to Asp-302, Ile-305, Thr-330 to Ala-331, Met-382, and Gly-411 each bind S-adenosyl-L-methionine.

In the N-terminal section; belongs to the precorrin-2 dehydrogenase / sirohydrochlorin ferrochelatase family. It in the C-terminal section; belongs to the precorrin methyltransferase family.

It carries out the reaction uroporphyrinogen III + 2 S-adenosyl-L-methionine = precorrin-2 + 2 S-adenosyl-L-homocysteine + H(+). The catalysed reaction is precorrin-2 + NAD(+) = sirohydrochlorin + NADH + 2 H(+). The enzyme catalyses siroheme + 2 H(+) = sirohydrochlorin + Fe(2+). The protein operates within cofactor biosynthesis; adenosylcobalamin biosynthesis; precorrin-2 from uroporphyrinogen III: step 1/1. Its pathway is cofactor biosynthesis; adenosylcobalamin biosynthesis; sirohydrochlorin from precorrin-2: step 1/1. It participates in porphyrin-containing compound metabolism; siroheme biosynthesis; precorrin-2 from uroporphyrinogen III: step 1/1. It functions in the pathway porphyrin-containing compound metabolism; siroheme biosynthesis; siroheme from sirohydrochlorin: step 1/1. The protein operates within porphyrin-containing compound metabolism; siroheme biosynthesis; sirohydrochlorin from precorrin-2: step 1/1. In terms of biological role, multifunctional enzyme that catalyzes the SAM-dependent methylations of uroporphyrinogen III at position C-2 and C-7 to form precorrin-2 via precorrin-1. Then it catalyzes the NAD-dependent ring dehydrogenation of precorrin-2 to yield sirohydrochlorin. Finally, it catalyzes the ferrochelation of sirohydrochlorin to yield siroheme. The chain is Siroheme synthase 1 from Aeromonas hydrophila subsp. hydrophila (strain ATCC 7966 / DSM 30187 / BCRC 13018 / CCUG 14551 / JCM 1027 / KCTC 2358 / NCIMB 9240 / NCTC 8049).